The primary structure comprises 777 residues: Subtilisin-like protease SBT3.3 (777 aa).

A signal peptide spans 1 to 24 (MRSFRSSILLVLLSLITVLNATRA). A propeptide spans 25–111 (RSETESKVHI…VIPDGFHELA (87 aa)) (removed in mature form). The 78-residue stretch at 32-109 (VHIVYLGEKK…VHVIPDGFHE (78 aa)) folds into the Inhibitor I9 domain. One can recognise a Peptidase S8 domain in the interval 115–624 (TWEYLGLSSA…GGIVNPEKAA (510 aa)). N-linked (GlcNAc...) asparagine glycosylation occurs at asparagine 131. Residue aspartate 145 is the Charge relay system of the active site. N-linked (GlcNAc...) asparagine glycosylation is present at asparagine 204. Histidine 220 serves as the catalytic Charge relay system. N-linked (GlcNAc...) asparagine glycans are attached at residues asparagine 235, asparagine 397, asparagine 412, asparagine 508, and asparagine 540. In terms of domain architecture, PA spans 403 to 481 (VCESLNLNPN…ELGTDILSYI (79 aa)). Catalysis depends on serine 555, which acts as the Charge relay system. An N-linked (GlcNAc...) asparagine glycan is attached at asparagine 647.

The protein belongs to the peptidase S8 family.

The protein resides in the secreted. It localises to the extracellular space. It is found in the extracellular matrix. Serine protease that plays a role in the control of the establishment of immune priming and systemic induced resistance. The polypeptide is Subtilisin-like protease SBT3.3 (Arabidopsis thaliana (Mouse-ear cress)).